The sequence spans 228 residues: MPPHFIDGEPHDHHHDRPRRVRVAGEPVRIGIGGPVGSGKTALVAALCRQLREELSLAVLTNDIYTTEDADFLRRHAVLPDERIAAVQTGGCPHTAIRDDITANLDAIDDLIAANPPLDLILVESGGDNLTATFSSGLIDVQIFVVDVAGGDKVPRKGGPGVTFSDLLVINKTDLAPMVGADLAVMRRDAEQVREGRPTALISLTEDPSSGPALAWVREQVRILADVH.

34-41 (GPVGSGKT) contributes to the GTP binding site.

The protein belongs to the SIMIBI class G3E GTPase family. UreG subfamily. Homodimer. UreD, UreF and UreG form a complex that acts as a GTP-hydrolysis-dependent molecular chaperone, activating the urease apoprotein by helping to assemble the nickel containing metallocenter of UreC. The UreE protein probably delivers the nickel.

It is found in the cytoplasm. In terms of biological role, facilitates the functional incorporation of the urease nickel metallocenter. This process requires GTP hydrolysis, probably effectuated by UreG. The chain is Urease accessory protein UreG from Rhodococcus opacus (strain B4).